The chain runs to 808 residues: uncharacterized protein (808 aa).

The 36-residue stretch at 6–41 folds into the EF-hand 1 domain; that stretch reads SRSEKVKRIFQQFDGNHDGGLNREEMAALVVAVNPR. TPR repeat units follow at residues 234–267, 269–301, 310–343, 344–377, 378–411, 412–445, and 447–479; these read FDGH…QPTD, RPHF…AESG, PQIY…CPTH, FRAL…KPDY, ADAH…KPGH, VDAL…WPNH, and RAQL…TNRV. The EF-hand 2 domain occupies 600-635; it reads AIKAINEKILALLDDSGSGRVDMGMFYAVIAPLCGG. Positions 773–794 form a coiled coil; sequence FKQEEYKFREYESEAEAMKAKC.

This is an uncharacterized protein from Arabidopsis thaliana (Mouse-ear cress).